The chain runs to 236 residues: 1-(5-phosphoribosyl)-5-[(5-phosphoribosylamino)methylideneamino] imidazole-4-carboxamide isomerase (236 aa).

The Proton acceptor role is filled by aspartate 8. Aspartate 127 (proton donor) is an active-site residue.

It belongs to the HisA/HisF family.

The protein localises to the cytoplasm. The enzyme catalyses 1-(5-phospho-beta-D-ribosyl)-5-[(5-phospho-beta-D-ribosylamino)methylideneamino]imidazole-4-carboxamide = 5-[(5-phospho-1-deoxy-D-ribulos-1-ylimino)methylamino]-1-(5-phospho-beta-D-ribosyl)imidazole-4-carboxamide. Its pathway is amino-acid biosynthesis; L-histidine biosynthesis; L-histidine from 5-phospho-alpha-D-ribose 1-diphosphate: step 4/9. This Campylobacter fetus subsp. fetus (strain 82-40) protein is 1-(5-phosphoribosyl)-5-[(5-phosphoribosylamino)methylideneamino] imidazole-4-carboxamide isomerase.